We begin with the raw amino-acid sequence, 242 residues long: Endoplasmic reticulum membrane protein complex subunit 7 (242 aa).

An N-terminal signal peptide occupies residues 1-23 (MAAALWGFFPVLLLLLLSGDVQS). Residues 24 to 159 (SEVPGAAAEG…IKRESWGWTD (136 aa)) lie on the Lumenal side of the membrane. A helical transmembrane segment spans residues 160–180 (FLMNPMVMMMVLPLLIFVLLP). Residues 181-242 (KVVNTSDPDM…TGKSGAGKRR (62 aa)) are Cytoplasmic-facing. The interval 217-242 (LFSSKSSGKSSSGSSKTGKSGAGKRR) is disordered. Low complexity predominate over residues 219–235 (SSKSSGKSSSGSSKTGK).

Belongs to the EMC7 family. Component of the ER membrane protein complex (EMC).

The protein resides in the endoplasmic reticulum membrane. Functionally, part of the endoplasmic reticulum membrane protein complex (EMC) that enables the energy-independent insertion into endoplasmic reticulum membranes of newly synthesized membrane proteins. Preferentially accommodates proteins with transmembrane domains that are weakly hydrophobic or contain destabilizing features such as charged and aromatic residues. Involved in the cotranslational insertion of multi-pass membrane proteins in which stop-transfer membrane-anchor sequences become ER membrane spanning helices. It is also required for the post-translational insertion of tail-anchored/TA proteins in endoplasmic reticulum membranes. By mediating the proper cotranslational insertion of N-terminal transmembrane domains in an N-exo topology, with translocated N-terminus in the lumen of the ER, controls the topology of multi-pass membrane proteins like the G protein-coupled receptors. By regulating the insertion of various proteins in membranes, it is indirectly involved in many cellular processes. The sequence is that of Endoplasmic reticulum membrane protein complex subunit 7 (EMC7) from Homo sapiens (Human).